The chain runs to 572 residues: Linalool synthase TPS2, chloroplastic (572 aa).

The transit peptide at 1 to 27 (EVEEPKTKISASTAEASSSRISSAKMT) directs the protein to the chloroplast. Residues 1–45 (EVEEPKTKISASTAEASSSRISSAKMTADGTIKLGDQSPLKQSEK) form a disordered region. The span at 8-28 (KISASTAEASSSRISSAKMTA) shows a compositional bias: low complexity. 5 residues coordinate (2E)-geranyl diphosphate: R284, D321, D325, R462, and N465. Mg(2+)-binding residues include D321 and D325. The DDXXD motif signature appears at 321–325 (DDVYD). Residues N465, T469, and S473 each coordinate Mg(2+).

This sequence belongs to the terpene synthase family. Tpsb subfamily. In terms of assembly, monomer. Requires Mg(2+) as cofactor. Mn(2+) serves as cofactor. Expressed in flowers and fruits.

It is found in the plastid. It localises to the chloroplast. It carries out the reaction (2E)-geranyl diphosphate = beta-myrcene + diphosphate. The enzyme catalyses (2E)-geranyl diphosphate + H2O = linalool + diphosphate. It catalyses the reaction (2E)-geranyl diphosphate = (Z)-beta-ocimene + diphosphate. The catalysed reaction is (2E)-geranyl diphosphate = (E)-beta-ocimene + diphosphate. Its pathway is secondary metabolite biosynthesis; terpenoid biosynthesis. Functionally, monoterpene synthase (mono-TPS) involved in the biosynthesis of monoterpenes natural products, constituent of coffee beverage aroma. Catalyzes the conversion of (2E)-geranyl diphosphate (GPP) into linalool and beta-myrcene, and, as minor products, cis-ocimene and trans-ocimene. Not able to use geranylgeranyl pyrophosphate (GGPP) and farnesyl pyrophosphate (FPP) as substrates. This is Linalool synthase TPS2, chloroplastic from Coffea arabica (Arabian coffee).